We begin with the raw amino-acid sequence, 508 residues long: Photosystem II CP47 reaction center protein (508 aa).

6 consecutive transmembrane segments (helical) span residues 21-36, 101-115, 140-156, 203-218, 237-252, and 457-472; these read AVHIMHTALVAGWAGS, ILFSGLCFLAAIWHW, GIHLFLSGLACFGFGAF, IAAGTLGILAGLFHLS, VLSSSIAAVFFAAFVV, and SFALLFFFGHIWHGAR.

Belongs to the PsbB/PsbC family. PsbB subfamily. PSII is composed of 1 copy each of membrane proteins PsbA, PsbB, PsbC, PsbD, PsbE, PsbF, PsbH, PsbI, PsbJ, PsbK, PsbL, PsbM, PsbT, PsbX, PsbY, PsbZ, Psb30/Ycf12, at least 3 peripheral proteins of the oxygen-evolving complex and a large number of cofactors. It forms dimeric complexes. It depends on Binds multiple chlorophylls. PSII binds additional chlorophylls, carotenoids and specific lipids. as a cofactor.

It localises to the plastid. The protein resides in the chloroplast thylakoid membrane. One of the components of the core complex of photosystem II (PSII). It binds chlorophyll and helps catalyze the primary light-induced photochemical processes of PSII. PSII is a light-driven water:plastoquinone oxidoreductase, using light energy to abstract electrons from H(2)O, generating O(2) and a proton gradient subsequently used for ATP formation. The protein is Photosystem II CP47 reaction center protein of Oenothera biennis (German evening primrose).